Reading from the N-terminus, the 436-residue chain is Ribulose bisphosphate carboxylase large chain (436 aa).

Asn104 and Thr154 together coordinate substrate. The active-site Proton acceptor is the Lys156. Lys158 is a substrate binding site. The Mg(2+) site is built by Lys182, Asp184, and Glu185. Position 182 is an N6-carboxylysine (Lys182). Residue His275 is the Proton acceptor of the active site. Residues Arg276, His308, and Ser360 each contribute to the substrate site.

It belongs to the RuBisCO large chain family. Type I subfamily. Heterohexadecamer of 8 large chains and 8 small chains; disulfide-linked. The disulfide link is formed within the large subunit homodimers. It depends on Mg(2+) as a cofactor. Post-translationally, the disulfide bond which can form in the large chain dimeric partners within the hexadecamer appears to be associated with oxidative stress and protein turnover.

The protein localises to the plastid. It is found in the chloroplast. It catalyses the reaction 2 (2R)-3-phosphoglycerate + 2 H(+) = D-ribulose 1,5-bisphosphate + CO2 + H2O. It carries out the reaction D-ribulose 1,5-bisphosphate + O2 = 2-phosphoglycolate + (2R)-3-phosphoglycerate + 2 H(+). RuBisCO catalyzes two reactions: the carboxylation of D-ribulose 1,5-bisphosphate, the primary event in carbon dioxide fixation, as well as the oxidative fragmentation of the pentose substrate in the photorespiration process. Both reactions occur simultaneously and in competition at the same active site. This Euglena anabaena (Euglenaria anabaena) protein is Ribulose bisphosphate carboxylase large chain.